The following is a 300-amino-acid chain: Cation-efflux pump FieF (300 aa).

The next 4 helical transmembrane spans lie at 12 to 32 (AALAATALASILLLIKIVAWY), 40 to 60 (LAALVDSLVDIAASLTNLLVV), 82 to 102 (AALAQSMFISGSALFLFLTGF), and 114 to 134 (PGVGIAVTVVALFSTLLLVTY). Zn(2+) is bound by residues aspartate 45 and aspartate 49. Zn(2+)-binding residues include histidine 153 and aspartate 157. Transmembrane regions (helical) follow at residues 155 to 175 (QSDVMMNGAILIALALSWYGF) and 178 to 198 (ADALFALAIGVYILYSALRMG).

The protein belongs to the cation diffusion facilitator (CDF) transporter (TC 2.A.4) family. FieF subfamily. In terms of assembly, homodimer.

It is found in the cell inner membrane. The catalysed reaction is Zn(2+)(in) + H(+)(out) = Zn(2+)(out) + H(+)(in). It catalyses the reaction Cd(2+)(in) + H(+)(out) = Cd(2+)(out) + H(+)(in). It carries out the reaction Fe(2+)(in) + H(+)(out) = Fe(2+)(out) + H(+)(in). Functionally, divalent metal cation transporter which exports Zn(2+), Cd(2+) and possibly Fe(2+). May be involved in zinc and iron detoxification by efflux. The protein is Cation-efflux pump FieF of Serratia proteamaculans (strain 568).